Reading from the N-terminus, the 201-residue chain is Probable thymidylate kinase (201 aa).

Residue Gly-10–Ser-17 participates in ATP binding.

This sequence belongs to the thymidylate kinase family.

It catalyses the reaction dTMP + ATP = dTDP + ADP. This Methanococcoides burtonii (strain DSM 6242 / NBRC 107633 / OCM 468 / ACE-M) protein is Probable thymidylate kinase.